A 103-amino-acid chain; its full sequence is UPF0235 protein Rleg2_3707 (103 aa).

The protein belongs to the UPF0235 family.

The sequence is that of UPF0235 protein Rleg2_3707 from Rhizobium leguminosarum bv. trifolii (strain WSM2304).